A 398-amino-acid chain; its full sequence is Dihydroorotase (398 aa).

2 residues coordinate Zn(2+): His-58 and His-60. Substrate-binding positions include 60 to 62 (HFR) and Asn-92. Zn(2+) is bound by residues Asp-151, His-178, and His-215. Asn-256 is a substrate binding site. Asp-283 serves as a coordination point for Zn(2+). Residue Asp-283 is part of the active site. Substrate is bound by residues His-287 and 297-298 (PG).

The protein belongs to the metallo-dependent hydrolases superfamily. DHOase family. Class I DHOase subfamily. Zn(2+) serves as cofactor.

It catalyses the reaction (S)-dihydroorotate + H2O = N-carbamoyl-L-aspartate + H(+). It functions in the pathway pyrimidine metabolism; UMP biosynthesis via de novo pathway; (S)-dihydroorotate from bicarbonate: step 3/3. Functionally, catalyzes the reversible cyclization of carbamoyl aspartate to dihydroorotate. This is Dihydroorotase from Clostridium botulinum (strain Eklund 17B / Type B).